The chain runs to 407 residues: Naringenin 8-dimethylallyltransferase 2, chloroplastic (407 aa).

The N-terminal 23 residues, 1 to 23 (MGFVLPASFPGASSITTGGSCLR), are a transit peptide targeting the chloroplast. The next 8 helical transmembrane spans lie at 117–137 (FCRP…SLVA), 145–165 (SLAF…IHIF), 206–226 (ILGL…TVFI), 248–268 (VLTA…GFFL), 285–305 (LIFC…FKDI), 328–348 (VFWI…LVGA), 352–372 (ILWS…VLWY), and 383–403 (VVLQ…YCLI).

It belongs to the UbiA prenyltransferase family. The cofactor is Mg(2+). It depends on Mn(2+) as a cofactor.

It localises to the plastid. The protein localises to the chloroplast membrane. It carries out the reaction (2S)-naringenin + dimethylallyl diphosphate = sophoraflavanone B + diphosphate. Functionally, involved in the biosynthesis of sophoraflavanone G (SFG). Can use flavanones (naringenin, liquiritigenin and hesperetin) as substrates, but not flavonols or isoflavones. Shows a strict specificity for dimethylallyl diphosphate. This Sophora flavescens (Shrubby sophora) protein is Naringenin 8-dimethylallyltransferase 2, chloroplastic (N8DT-2).